The sequence spans 353 residues: Protein RecA (353 aa).

67–74 (GPESSGKT) contacts ATP.

This sequence belongs to the RecA family.

Its subcellular location is the cytoplasm. Can catalyze the hydrolysis of ATP in the presence of single-stranded DNA, the ATP-dependent uptake of single-stranded DNA by duplex DNA, and the ATP-dependent hybridization of homologous single-stranded DNAs. It interacts with LexA causing its activation and leading to its autocatalytic cleavage. The polypeptide is Protein RecA (Shewanella woodyi (strain ATCC 51908 / MS32)).